The following is a 183-amino-acid chain: Large ribosomal subunit protein eL18 (183 aa).

The tract at residues 146-183 (HFGPAPGVPHSHTKPYVRSKGRKFEKARGRRKSRGFRV) is disordered. 2 stretches are compositionally biased toward basic residues: residues 156-166 (SHTKPYVRSKG) and 173-183 (RGRRKSRGFRV).

Belongs to the eukaryotic ribosomal protein eL18 family.

This Cicer arietinum (Chickpea) protein is Large ribosomal subunit protein eL18 (RPL18).